The primary structure comprises 403 residues: Inhibitor of growth protein 3 (403 aa).

Positions 112 to 149 are disordered; sequence DTPSQPVNNHHAHSHTPVEKRKYNPTSHHTTTDHIPEK. Glycyl lysine isopeptide (Lys-Gly) (interchain with G-Cter in SUMO2) cross-links involve residues K133, K150, and K152. An N6-acetyllysine modification is found at K166. K241 participates in a covalent cross-link: Glycyl lysine isopeptide (Lys-Gly) (interchain with G-Cter in SUMO2). The residue at position 249 (K249) is an N6-acetyllysine. A disordered region spans residues 271 to 310; that stretch reads TQNASSSAADSRSGRKSKNNNKSSSQQSSSSSSSSSLSSC. Low complexity predominate over residues 290 to 310; the sequence is NNKSSSQQSSSSSSSSSLSSC. The PHD-type zinc finger occupies 345-394; that stretch reads PRYCICNQVSYGEMVGCDNQDCPIEWFHYGCVGLTEAPKGKWYCPQCTAA. The Zn(2+) site is built by C348, C350, C361, C366, H372, C375, C388, and C391.

It belongs to the ING family. Interacts with H3K4me3 and to a lesser extent with H3K4me2. Component of the NuA4 histone acetyltransferase complex which contains the catalytic subunit KAT5/TIP60 and the subunits EP400, TRRAP/PAF400, BRD8/SMAP, EPC1, DMAP1/DNMAP1, RUVBL1/TIP49, RUVBL2, ING3, actin, ACTL6A/BAF53A, MORF4L1/MRG15, MORF4L2/MRGX, MRGBP, YEATS4/GAS41, VPS72/YL1 and MEAF6. The NuA4 complex interacts with MYC. HTATTIP/TIP60, EPC1, and ING3 together constitute a minimal HAT complex termed Piccolo NuA4. Component of a SWR1-like complex.

The protein resides in the nucleus. In terms of biological role, component of the NuA4 histone acetyltransferase (HAT) complex which is involved in transcriptional activation of select genes principally by acetylation of nucleosomal histones H4 and H2A. This modification may both alter nucleosome - DNA interactions and promote interaction of the modified histones with other proteins which positively regulate transcription. This complex may be required for the activation of transcriptional programs associated with oncogene and proto-oncogene mediated growth induction, tumor suppressor mediated growth arrest and replicative senescence, apoptosis, and DNA repair. NuA4 may also play a direct role in DNA repair when directly recruited to sites of DNA damage. Component of a SWR1-like complex that specifically mediates the removal of histone H2A.Z/H2AZ1 from the nucleosome. This is Inhibitor of growth protein 3 (ING3) from Pongo abelii (Sumatran orangutan).